The following is a 158-amino-acid chain: 6,7-dimethyl-8-ribityllumazine synthase (158 aa).

Residues Phe18, 50–52 (SYD), and 74–76 (AVI) each bind 5-amino-6-(D-ribitylamino)uracil. Residue 79-80 (ET) participates in (2S)-2-hydroxy-3-oxobutyl phosphate binding. His82 serves as the catalytic Proton donor. Position 107 (Leu107) interacts with 5-amino-6-(D-ribitylamino)uracil. Arg122 lines the (2S)-2-hydroxy-3-oxobutyl phosphate pocket.

The protein belongs to the DMRL synthase family.

The enzyme catalyses (2S)-2-hydroxy-3-oxobutyl phosphate + 5-amino-6-(D-ribitylamino)uracil = 6,7-dimethyl-8-(1-D-ribityl)lumazine + phosphate + 2 H2O + H(+). The protein operates within cofactor biosynthesis; riboflavin biosynthesis; riboflavin from 2-hydroxy-3-oxobutyl phosphate and 5-amino-6-(D-ribitylamino)uracil: step 1/2. In terms of biological role, catalyzes the formation of 6,7-dimethyl-8-ribityllumazine by condensation of 5-amino-6-(D-ribitylamino)uracil with 3,4-dihydroxy-2-butanone 4-phosphate. This is the penultimate step in the biosynthesis of riboflavin. This is 6,7-dimethyl-8-ribityllumazine synthase from Sulfolobus acidocaldarius (strain ATCC 33909 / DSM 639 / JCM 8929 / NBRC 15157 / NCIMB 11770).